The primary structure comprises 549 residues: Myotubularin-related protein 9 (549 aa).

At methionine 1 the chain carries N-acetylmethionine. The region spanning 4 to 99 is the GRAM domain; the sequence is AELIKTPRVD…LNIASSIEAL (96 aa). A Myotubularin phosphatase domain is found at 123 to 498; the sequence is GWHSFLPEQE…QSLPLWEGIF (376 aa). The stretch at 508–542 forms a coiled coil; sequence LDEAYEEMVNIIEYNKELQAKVNILRRQLAELETE. Serine 548 carries the phosphoserine modification.

The protein belongs to the protein-tyrosine phosphatase family. Non-receptor class myotubularin subfamily. Homodimer. Heterodimer (via C-terminus) with lipid phosphatase MTMR6 (via C-terminus). Heterodimer (via coiled coil domain) with lipid phosphatase MTMR7 (via C-terminus). Heterodimer with lipid phosphatase MTMR8. Expressed in many tissues.

It is found in the cytoplasm. Its subcellular location is the cell projection. The protein resides in the ruffle membrane. The protein localises to the perinuclear region. It localises to the endoplasmic reticulum. Functionally, acts as an adapter for myotubularin-related phosphatases. Increases lipid phosphatase MTMR6 catalytic activity, specifically towards phosphatidylinositol 3,5-bisphosphate and MTMR6 binding affinity for phosphorylated phosphatidylinositols. Positively regulates lipid phosphatase MTMR7 catalytic activity. Increases MTMR8 catalytic activity towards phosphatidylinositol 3-phosphate. The formation of the MTMR6-MTMR9 complex, stabilizes both MTMR6 and MTMR9 protein levels. Stabilizes MTMR8 protein levels. Plays a role in the late stages of macropinocytosis possibly by regulating MTMR6-mediated dephosphorylation of phosphatidylinositol 3-phosphate in membrane ruffles. Negatively regulates autophagy, in part via its association with MTMR8. Negatively regulates DNA damage-induced apoptosis, in part via its association with MTMR6. Does not bind mono-, di- and tri-phosphorylated phosphatidylinositols, phosphatidic acid and phosphatidylserine. The chain is Myotubularin-related protein 9 (MTMR9) from Homo sapiens (Human).